The following is a 476-amino-acid chain: Aspartyl/glutamyl-tRNA(Asn/Gln) amidotransferase subunit B (476 aa).

The protein belongs to the GatB/GatE family. GatB subfamily. As to quaternary structure, heterotrimer of A, B and C subunits.

It catalyses the reaction L-glutamyl-tRNA(Gln) + L-glutamine + ATP + H2O = L-glutaminyl-tRNA(Gln) + L-glutamate + ADP + phosphate + H(+). The enzyme catalyses L-aspartyl-tRNA(Asn) + L-glutamine + ATP + H2O = L-asparaginyl-tRNA(Asn) + L-glutamate + ADP + phosphate + 2 H(+). In terms of biological role, allows the formation of correctly charged Asn-tRNA(Asn) or Gln-tRNA(Gln) through the transamidation of misacylated Asp-tRNA(Asn) or Glu-tRNA(Gln) in organisms which lack either or both of asparaginyl-tRNA or glutaminyl-tRNA synthetases. The reaction takes place in the presence of glutamine and ATP through an activated phospho-Asp-tRNA(Asn) or phospho-Glu-tRNA(Gln). This is Aspartyl/glutamyl-tRNA(Asn/Gln) amidotransferase subunit B from Clostridium botulinum (strain Kyoto / Type A2).